Here is a 112-residue protein sequence, read N- to C-terminus: UPF0122 protein CPF_1968 (112 aa).

This sequence belongs to the UPF0122 family.

Its function is as follows. Might take part in the signal recognition particle (SRP) pathway. This is inferred from the conservation of its genetic proximity to ftsY/ffh. May be a regulatory protein. This chain is UPF0122 protein CPF_1968, found in Clostridium perfringens (strain ATCC 13124 / DSM 756 / JCM 1290 / NCIMB 6125 / NCTC 8237 / Type A).